The primary structure comprises 164 residues: Serine/arginine-rich splicing factor 3 (164 aa).

An N-acetylmethionine modification is found at Met1. Residues 1 to 90 form a sufficient for interaction with NXF1 and SRSP region; that stretch reads MHRDSCPLDC…SNGEKRSRNR (90 aa). Ser5 is modified (phosphoserine). Residues 10–83 form the RRM domain; that stretch reads CKVYVGNLGN…CRVRVELSNG (74 aa). Lys23 carries the post-translational modification N6-acetyllysine. The interval 81-164 is disordered; that stretch reads SNGEKRSRNR…RSRSRSNERK (84 aa). The span at 107-128 shows a compositional bias: basic residues; the sequence is RSPPPRRRSPRRRSFSRSRSRS. One copy of the B-1 repeat lies at 119 to 133; the sequence is RSFSRSRSRSLSRDR. A 2 X approximate repeats, basic region spans residues 119–164; sequence RSFSRSRSRSLSRDRRRERSLSRERNHKPSRSFSRSRSRSRSNERK. The segment covering 129 to 142 has biased composition (basic and acidic residues); it reads LSRDRRRERSLSRE. Residues 143–158 are compositionally biased toward basic residues; that stretch reads RNHKPSRSFSRSRSRS. A B-2 repeat occupies 149–164; it reads RSFSRSRSRSRSNERK.

Belongs to the splicing factor SR family. In terms of assembly, interacts with CPSF6. Interacts with RBMY1A1. Interacts with SREK1/SFRS12. Interacts with NXF1. Interacts with YTHDC1, leading to recruitment to RNA elements adjacent to m6A sites. Interacts with SRSP; increases SRSF3 binding to specific exons. Post-translationally, phosphorylated by CLK1, CLK2, CLK3 and CLK4. Extensively phosphorylated on serine residues in the RS domain.

The protein localises to the nucleus. It is found in the nucleus speckle. It localises to the cytoplasm. In terms of biological role, splicing factor, which binds the consensus motif 5'-C[ACU][AU]C[ACU][AC]C-3' within pre-mRNA and promotes specific exons inclusion during alternative splicing. Interaction with YTHDC1, a RNA-binding protein that recognizes and binds N6-methyladenosine (m6A)-containing RNAs, promotes recruitment of SRSF3 to its mRNA-binding elements adjacent to m6A sites within exons. Also functions as an adapter involved in mRNA nuclear export. Binds mRNA which is thought to be transferred to the NXF1-NXT1 heterodimer for export (TAP/NXF1 pathway); enhances NXF1-NXT1 RNA-binding activity. Involved in nuclear export of m6A-containing mRNAs via interaction with YTHDC1: interaction with YTHDC1 facilitates m6A-containing mRNA-binding to both SRSF3 and NXF1, promoting mRNA nuclear export. The chain is Serine/arginine-rich splicing factor 3 (SRSF3) from Bos taurus (Bovine).